Reading from the N-terminus, the 201-residue chain is Phospholipase A2 inhibitor PIP (201 aa).

An N-terminal signal peptide occupies residues 1-19 (MKSLQTICLLFIFIARGTS). Cystine bridges form between Cys-22–Cys-46, Cys-25–Cys-32, Cys-39–Cys-67, Cys-73–Cys-94, Cys-95–Cys-100, Cys-118–Cys-143, Cys-136–Cys-165, and Cys-169–Cys-191. Residue Asn-157 is glycosylated (N-linked (GlcNAc...) asparagine).

As to quaternary structure, homohexamer. Post-translationally, glycosylated. As to expression, expressed by the liver.

The protein localises to the secreted. Functionally, inhibits the enzymatic activity of phospholipase A2 (PA2). Binds to the major PLA2 toxin of D.russelli siamensis (Daboiatoxin, AC Q7T2R1, and AC Q7T3T5) at 1-2-fold molar excess of inhibitor to toxin. It exhibits broad spectra in neutralizing the toxicity of various snake venoms and toxins and inhibits the formation of edema in mice. May bind to PLA2 through its proline-rich hydrophobic core region. The protein is Phospholipase A2 inhibitor PIP of Malayopython reticulatus (Reticulate python).